Here is a 261-residue protein sequence, read N- to C-terminus: DNA repair protein RecO (261 aa).

The protein belongs to the RecO family.

Its function is as follows. Involved in DNA repair and RecF pathway recombination. This is DNA repair protein RecO from Mycobacteroides abscessus (strain ATCC 19977 / DSM 44196 / CCUG 20993 / CIP 104536 / JCM 13569 / NCTC 13031 / TMC 1543 / L948) (Mycobacterium abscessus).